The chain runs to 840 residues: Protein translocase subunit SecA (840 aa).

Residues Q87, 105–109 (GEGKT), and D494 each bind ATP. Positions 791–840 (LRKEQEDQPMFFGPAEGAGQKPQTRKDRKVGRNDPCPCGSGKKYKKCCGK) are disordered. The Zn(2+) site is built by C826, C828, C837, and C838.

Belongs to the SecA family. Monomer and homodimer. Part of the essential Sec protein translocation apparatus which comprises SecA, SecYEG and auxiliary proteins SecDF-YajC and YidC. Zn(2+) serves as cofactor.

It localises to the cell inner membrane. It is found in the cytoplasm. The enzyme catalyses ATP + H2O + cellular proteinSide 1 = ADP + phosphate + cellular proteinSide 2.. Its function is as follows. Part of the Sec protein translocase complex. Interacts with the SecYEG preprotein conducting channel. Has a central role in coupling the hydrolysis of ATP to the transfer of proteins into and across the cell membrane, serving as an ATP-driven molecular motor driving the stepwise translocation of polypeptide chains across the membrane. The sequence is that of Protein translocase subunit SecA from Syntrophobacter fumaroxidans (strain DSM 10017 / MPOB).